The chain runs to 458 residues: Pyruvate kinase (458 aa).

A substrate-binding site is contributed by Arg33. Residues Asn35, Ser37, and Asp67 each coordinate K(+). Residue 35 to 38 coordinates ATP; that stretch reads NASH. Residues Arg74 and Lys148 each contribute to the ATP site. Glu214 contacts Mg(2+). Gly237, Asp238, and Thr270 together coordinate substrate. Position 238 (Asp238) interacts with Mg(2+).

This sequence belongs to the pyruvate kinase family. In terms of assembly, homotetramer. A divalent metal cation serves as cofactor.

It catalyses the reaction pyruvate + ATP = phosphoenolpyruvate + ADP + H(+). The protein operates within carbohydrate degradation; glycolysis; pyruvate from D-glyceraldehyde 3-phosphate: step 5/5. Not activated by classical allosteric effectors. The polypeptide is Pyruvate kinase (pyk) (Aeropyrum pernix (strain ATCC 700893 / DSM 11879 / JCM 9820 / NBRC 100138 / K1)).